The sequence spans 149 residues: uncharacterized protein (149 aa).

The span at 1-15 (MQRQTGHMEDKKRTG) shows a compositional bias: basic and acidic residues. Residues 1 to 32 (MQRQTGHMEDKKRTGLESQGTENAFSDGRDGK) are disordered.

This is an uncharacterized protein from Gallus gallus (Chicken).